Consider the following 428-residue polypeptide: GTPase Obg (428 aa).

The Obg domain maps to 1–158; the sequence is MFVDQVKVYV…RDVILELKVL (158 aa). The interval 118–145 is disordered; it reads KGGRGGRGNSRFATPANPAPQLSENGEP. The 171-residue stretch at 159 to 329 folds into the OBG-type G domain; the sequence is ADVGLVGFPS…LLFEIANQLE (171 aa). GTP contacts are provided by residues 165–172, 190–194, 212–215, 282–285, and 310–312; these read GFPSVGKS, FTTLV, DLPG, NKMD, and SAI. Mg(2+) contacts are provided by Ser172 and Thr192. Positions 350–428 constitute an OCT domain; the sequence is RFDEGDAPFE…LLEFEFEFID (79 aa).

The protein belongs to the TRAFAC class OBG-HflX-like GTPase superfamily. OBG GTPase family. In terms of assembly, monomer. Mg(2+) is required as a cofactor.

It is found in the cytoplasm. Functionally, an essential GTPase which binds GTP, GDP and possibly (p)ppGpp with moderate affinity, with high nucleotide exchange rates and a fairly low GTP hydrolysis rate. Plays a role in control of the cell cycle, stress response, ribosome biogenesis and in those bacteria that undergo differentiation, in morphogenesis control. This is GTPase Obg from Bacillus pumilus (strain SAFR-032).